A 397-amino-acid polypeptide reads, in one-letter code: Elongation factor Tu 1 (397 aa).

The 197-residue stretch at Lys10–Val206 folds into the tr-type G domain. The segment at Gly19–Thr26 is G1. Position 19 to 26 (Gly19 to Thr26) interacts with GTP. Position 26 (Thr26) interacts with Mg(2+). A G2 region spans residues Gly61–Ser65. Residues Asp82–Gly85 form a G3 region. GTP contacts are provided by residues Asp82–His86 and Asn137–Asp140. Residues Asn137–Asp140 form a G4 region. Residues Ser175 to Leu177 are G5.

The protein belongs to the TRAFAC class translation factor GTPase superfamily. Classic translation factor GTPase family. EF-Tu/EF-1A subfamily. As to quaternary structure, monomer.

It is found in the cytoplasm. It catalyses the reaction GTP + H2O = GDP + phosphate + H(+). Its function is as follows. GTP hydrolase that promotes the GTP-dependent binding of aminoacyl-tRNA to the A-site of ribosomes during protein biosynthesis. The sequence is that of Elongation factor Tu 1 from Alkaliphilus metalliredigens (strain QYMF).